Consider the following 387-residue polypeptide: 3-ketoacyl-CoA thiolase (387 aa).

C91 serves as the catalytic Acyl-thioester intermediate. Active-site proton acceptor residues include H343 and C373.

It belongs to the thiolase-like superfamily. Thiolase family. Heterotetramer of two alpha chains (FadB) and two beta chains (FadA).

Its subcellular location is the cytoplasm. The catalysed reaction is an acyl-CoA + acetyl-CoA = a 3-oxoacyl-CoA + CoA. The protein operates within lipid metabolism; fatty acid beta-oxidation. Catalyzes the final step of fatty acid oxidation in which acetyl-CoA is released and the CoA ester of a fatty acid two carbons shorter is formed. In Shigella boydii serotype 4 (strain Sb227), this protein is 3-ketoacyl-CoA thiolase.